The primary structure comprises 247 residues: 2,3-bisphosphoglycerate-dependent phosphoglycerate mutase (247 aa).

Residues 8–15, 21–22, arginine 60, 87–90, lysine 98, 114–115, and 183–184 contribute to the substrate site; these read RHGESTWN, TG, ERHY, RR, and GN. Histidine 9 (tele-phosphohistidine intermediate) is an active-site residue. The Proton donor/acceptor role is filled by glutamate 87.

It belongs to the phosphoglycerate mutase family. BPG-dependent PGAM subfamily. As to quaternary structure, homodimer.

The enzyme catalyses (2R)-2-phosphoglycerate = (2R)-3-phosphoglycerate. It functions in the pathway carbohydrate degradation; glycolysis; pyruvate from D-glyceraldehyde 3-phosphate: step 3/5. Functionally, catalyzes the interconversion of 2-phosphoglycerate and 3-phosphoglycerate. This is 2,3-bisphosphoglycerate-dependent phosphoglycerate mutase from Acidovorax ebreus (strain TPSY) (Diaphorobacter sp. (strain TPSY)).